The primary structure comprises 1499 residues: Collagen alpha-2(V) chain (1499 aa).

The first 26 residues, 1-26, serve as a signal peptide directing secretion; it reads MMANWAEARPLLILIVLLGQFVSIKA. The region spanning 39 to 97 is the VWFC domain; that stretch reads IACTQNGQMYLNRDIWKPAPCQICVCDNGAILCDKIECQDVLDCADPVTPPGECCPVCS. The tract at residues 104–1268 is disordered; the sequence is NTNFGRGRKG…DDKNKTDPGV (1165 aa). The segment covering 170-182 has biased composition (pro residues); that stretch reads PGAPGPPGHPSHP. Positions 212–227 are enriched in low complexity; sequence PGSVGPVGPRGPQGLQ. Positions 236–248 are enriched in pro residues; the sequence is TGPPGEPGDPGPM. Pro-290, Pro-293, and Pro-296 each carry hydroxyproline. 2 stretches are compositionally biased toward low complexity: residues 322 to 340 and 427 to 443; these read EAGP…PRGM and TPGA…SGPP. The short motif at 506-508 is the Cell attachment site element; that stretch reads RGD. Low complexity-rich tracts occupy residues 604 to 626 and 694 to 709; these read SIGI…SGDP and DQGV…PLGP. Hydroxyproline is present on residues Pro-611 and Pro-617. Positions 710–721 are enriched in basic and acidic residues; it reads RGERGNPGERGE. Gly residues predominate over residues 732 to 741; the sequence is GMAGGHGPDG. Over residues 742–758 the composition is skewed to low complexity; it reads PKGSPGPSGTPGDTGPP. Positions 776–787 are enriched in basic and acidic residues; it reads KGDRGGIGEKGA. The span at 826-841 shows a compositional bias: low complexity; sequence PPGSRGNPGSRGENGP. Gly residues predominate over residues 894–903; sequence GLKGGRGTQG. At Pro-919 the chain carries 3-hydroxyproline; partial. Positions 919 to 929 are enriched in pro residues; it reads PPGPAGAPGPA. 6 short sequence motifs (cell attachment site) span residues 944–946, 1067–1069, 1070–1072, 1100–1102, 1127–1129, and 1136–1138; these read RGD. Residues 1063 to 1072 show a composition bias toward basic and acidic residues; that stretch reads AVGERGDRGD. The segment covering 1093 to 1114 has biased composition (low complexity); it reads APGDAGQRGDPGSRGPIGPPGR. Residues 1127–1141 show a composition bias toward basic and acidic residues; sequence RGDKGDHGDRGDRGQ. Residue Pro-1156 is modified to 3-hydroxyproline; partial. 2 stretches are compositionally biased toward pro residues: residues 1171–1181 and 1211–1226; these read PFGPRGPPGPV and EGPP…PGPP. The propeptide at 1230–1499 is C-terminal propeptide; sequence TAALGDIMGH…GVEIGPVCFV (270 aa). N-linked (GlcNAc...) asparagine glycosylation is present at Asn-1262. The 234-residue stretch at 1266-1499 folds into the Fibrillar collagen NC1 domain; sequence PGVHATLKSL…GVEIGPVCFV (234 aa). Intrachain disulfides connect Cys-1296–Cys-1328, Cys-1336–Cys-1497, and Cys-1405–Cys-1450. Ca(2+) contacts are provided by Asp-1314, Asn-1316, Gln-1317, and Asp-1322. N-linked (GlcNAc...) asparagine glycosylation is present at Asn-1400.

This sequence belongs to the fibrillar collagen family. In terms of assembly, trimers of two alpha 1(V) and one alpha 2(V) chains in most tissues and trimers of one alpha 1(V), one alpha 2(V), and one alpha 3(V) chains in placenta. Prolines at the third position of the tripeptide repeating unit (G-X-P) are hydroxylated in some or all of the chains. Probably 3-hydroxylated on Pro-919 and Pro-1156 by LEPREL1.

The protein localises to the secreted. Its subcellular location is the extracellular space. It localises to the extracellular matrix. Functionally, type V collagen is a member of group I collagen (fibrillar forming collagen). It is a minor connective tissue component of nearly ubiquitous distribution. Type V collagen binds to DNA, heparan sulfate, thrombospondin, heparin, and insulin. Type V collagen is a key determinant in the assembly of tissue-specific matrices. This is Collagen alpha-2(V) chain (COL5A2) from Homo sapiens (Human).